Consider the following 1213-residue polypeptide: DNA-directed RNA polymerase subunit beta' (1213 aa).

Zn(2+)-binding residues include Cys-60, Cys-62, Cys-75, and Cys-78. Residues Asp-450, Asp-452, and Asp-454 each contribute to the Mg(2+) site. Cys-819, Cys-893, Cys-900, and Cys-903 together coordinate Zn(2+).

It belongs to the RNA polymerase beta' chain family. The RNAP catalytic core consists of 2 alpha, 1 beta, 1 beta' and 1 omega subunit. When a sigma factor is associated with the core the holoenzyme is formed, which can initiate transcription. Requires Mg(2+) as cofactor. Zn(2+) serves as cofactor.

It carries out the reaction RNA(n) + a ribonucleoside 5'-triphosphate = RNA(n+1) + diphosphate. Its function is as follows. DNA-dependent RNA polymerase catalyzes the transcription of DNA into RNA using the four ribonucleoside triphosphates as substrates. This Streptococcus pyogenes serotype M1 protein is DNA-directed RNA polymerase subunit beta'.